The following is a 103-amino-acid chain: Small ribosomal subunit protein uS14c (103 aa).

Belongs to the universal ribosomal protein uS14 family. As to quaternary structure, part of the 30S ribosomal subunit.

Its subcellular location is the plastid. The protein resides in the chloroplast. In terms of biological role, binds 16S rRNA, required for the assembly of 30S particles. The chain is Small ribosomal subunit protein uS14c from Agrostis stolonifera (Creeping bentgrass).